The following is a 127-amino-acid chain: Aspartate 1-decarboxylase (127 aa).

The active-site Schiff-base intermediate with substrate; via pyruvic acid is the serine 25. Residue serine 25 is modified to Pyruvic acid (Ser). Threonine 57 provides a ligand contact to substrate. Tyrosine 58 (proton donor) is an active-site residue. Residue 73–75 (GAA) coordinates substrate.

The protein belongs to the PanD family. As to quaternary structure, heterooctamer of four alpha and four beta subunits. It depends on pyruvate as a cofactor. Post-translationally, is synthesized initially as an inactive proenzyme, which is activated by self-cleavage at a specific serine bond to produce a beta-subunit with a hydroxyl group at its C-terminus and an alpha-subunit with a pyruvoyl group at its N-terminus.

It localises to the cytoplasm. The catalysed reaction is L-aspartate + H(+) = beta-alanine + CO2. Its pathway is cofactor biosynthesis; (R)-pantothenate biosynthesis; beta-alanine from L-aspartate: step 1/1. Catalyzes the pyruvoyl-dependent decarboxylation of aspartate to produce beta-alanine. The sequence is that of Aspartate 1-decarboxylase from Listeria monocytogenes serovar 1/2a (strain ATCC BAA-679 / EGD-e).